We begin with the raw amino-acid sequence, 81 residues long: Photosystem I iron-sulfur center (81 aa).

4Fe-4S ferredoxin-type domains follow at residues 2–31 (SHSV…MVPW) and 37–68 (GQIA…VRVY). Residues cysteine 11, cysteine 14, cysteine 17, cysteine 21, cysteine 48, cysteine 51, cysteine 54, and cysteine 58 each coordinate [4Fe-4S] cluster.

In terms of assembly, the cyanobacterial PSI reaction center is composed of one copy each of PsaA,B,C,D,E,F,I,J,K,L,M and X, and forms trimeric complexes. It depends on [4Fe-4S] cluster as a cofactor.

The protein resides in the cellular thylakoid membrane. It carries out the reaction reduced [plastocyanin] + hnu + oxidized [2Fe-2S]-[ferredoxin] = oxidized [plastocyanin] + reduced [2Fe-2S]-[ferredoxin]. Apoprotein for the two 4Fe-4S centers FA and FB of photosystem I (PSI); essential for photochemical activity. FB is the terminal electron acceptor of PSI, donating electrons to ferredoxin. The C-terminus interacts with PsaA/B/D and helps assemble the protein into the PSI complex. Required for binding of PsaD and PsaE to PSI. PSI is a plastocyanin/cytochrome c6-ferredoxin oxidoreductase, converting photonic excitation into a charge separation, which transfers an electron from the donor P700 chlorophyll pair to the spectroscopically characterized acceptors A0, A1, FX, FA and FB in turn. This Prochlorococcus marinus (strain SARG / CCMP1375 / SS120) protein is Photosystem I iron-sulfur center.